The primary structure comprises 83 residues: MPNIKSAIKRVRTNETAEARNISQKNDMRSAVKHAKAAIAENADNKQELVRVAVKKVDKTAQANLIHNNKADRIKSQLMSADK.

Belongs to the bacterial ribosomal protein bS20 family.

Functionally, binds directly to 16S ribosomal RNA. This is Small ribosomal subunit protein bS20 from Staphylococcus carnosus (strain TM300).